The chain runs to 320 residues: Apolipoprotein E (320 aa).

The first 18 residues, 1-18 (MKVLWAALLVAFLAGCQG), serve as a signal peptide directing secretion. A run of 8 repeats spans residues 82–103 (ALMEETMKELKAYKSELEEQLS), 104–125 (PVAEETRARLSKELQAAQARLG), 126–147 (ADMEDVRSRLAQYRSEVQAMLG), 148–169 (QSTDELRARLASHLRKLRKRLL), 170–191 (RDVDDLQKRLAVYQAGAREGAE), 192–213 (RGVSAIRERLGTLVEQGRARAA), 214–236 (TVGSSLASQPLQERAQAWGERLR), and 237–258 (ARMEEVGSRTRDRLDEVKEQVE). The tract at residues 82-258 (ALMEETMKEL…RLDEVKEQVE (177 aa)) is 8 X 22 AA approximate tandem repeats. At Met-145 the chain carries Methionine sulfoxide. Ser-149 is modified (phosphoserine). The LDL and other lipoprotein receptors binding stretch occupies residues 160 to 170 (HLRKLRKRLLR). 164-167 (LRKR) provides a ligand contact to heparin. The tract at residues 212–293 (AATVGSSLAS…SWFEPLVEDM (82 aa)) is lipid-binding and lipoprotein association. Thr-214 carries O-linked (GalNAc...) threonine glycosylation. Position 232–239 (232–239 (GERLRARM)) interacts with heparin. Residues 269–320 (QQMRLQAEAFQARLKSWFEPLVEDMQRQWAGLVEKVQAAVGASTTPVPSDNH) form a homooligomerization region. A specificity for association with VLDL region spans residues 281–293 (RLKSWFEPLVEDM).

It belongs to the apolipoprotein A1/A4/E family. Homotetramer. May interact with ABCA1; functionally associated with ABCA1 in the biogenesis of HDLs. May interact with APP/A4 amyloid-beta peptide; the interaction is extremely stable in vitro but its physiological significance is unclear. May interact with MAPT. May interact with MAP2. In the cerebrospinal fluid, interacts with secreted SORL1. Interacts with PMEL; this allows the loading of PMEL luminal fragment on ILVs to induce fibril nucleation. APOE exists as multiple glycosylated and sialylated glycoforms within cells and in plasma. The extent of glycosylation and sialylation are tissue and context specific. Post-translationally, glycated in plasma VLDL. In terms of processing, phosphorylated by FAM20C in the extracellular medium.

It is found in the secreted. Its subcellular location is the extracellular space. The protein localises to the extracellular matrix. It localises to the extracellular vesicle. The protein resides in the endosome. It is found in the multivesicular body. APOE is an apolipoprotein, a protein associating with lipid particles, that mainly functions in lipoprotein-mediated lipid transport between organs via the plasma and interstitial fluids. APOE is a core component of plasma lipoproteins and is involved in their production, conversion and clearance. Apolipoproteins are amphipathic molecules that interact both with lipids of the lipoprotein particle core and the aqueous environment of the plasma. As such, APOE associates with chylomicrons, chylomicron remnants, very low density lipoproteins (VLDL) and intermediate density lipoproteins (IDL) but shows a preferential binding to high-density lipoproteins (HDL). It also binds a wide range of cellular receptors including the LDL receptor/LDLR, the LDL receptor-related proteins LRP1, LRP2 and LRP8 and the very low-density lipoprotein receptor/VLDLR that mediate the cellular uptake of the APOE-containing lipoprotein particles. Finally, APOE also has a heparin-binding activity and binds heparan-sulfate proteoglycans on the surface of cells, a property that supports the capture and the receptor-mediated uptake of APOE-containing lipoproteins by cells. A main function of APOE is to mediate lipoprotein clearance through the uptake of chylomicrons, VLDLs, and HDLs by hepatocytes. APOE is also involved in the biosynthesis by the liver of VLDLs as well as their uptake by peripheral tissues ensuring the delivery of triglycerides and energy storage in muscle, heart and adipose tissues. By participating in the lipoprotein-mediated distribution of lipids among tissues, APOE plays a critical role in plasma and tissues lipid homeostasis. APOE is also involved in two steps of reverse cholesterol transport, the HDLs-mediated transport of cholesterol from peripheral tissues to the liver, and thereby plays an important role in cholesterol homeostasis. First, it is functionally associated with ABCA1 in the biogenesis of HDLs in tissues. Second, it is enriched in circulating HDLs and mediates their uptake by hepatocytes. APOE also plays an important role in lipid transport in the central nervous system, regulating neuron survival and sprouting. The polypeptide is Apolipoprotein E (APOE) (Cebus capucinus (White-faced sapajou)).